Reading from the N-terminus, the 218-residue chain is MANSSPVYDWFQERLEIQDIADDVTSKYVPPHVNIFYCLGGITLVCFLIQFATGFAMTFYYKPTVTEAYSSVSYLMTDVSFGWLIRSVHRWSASMMVLMLILHVFRVYLTGGFKRPRELTWITGVVMAVITVAFGVTGYSLPWDQVGYWAVKIVSGVPAAIPVIGDFMVELLRGGESVGQSTLTRFYSLHTFVMPWLLAVFMLMHFLMIRKQGISGPL.

Residues I35–F55 form a helical membrane-spanning segment. Position 38 (C38) interacts with heme c. H89 and H103 together coordinate heme b. Transmembrane regions (helical) follow at residues A93 to F113, L119 to Y139, and L189 to I209. Heme b is bound by residues H190 and H205.

Belongs to the cytochrome b family. PetB subfamily. As to quaternary structure, the 4 large subunits of the cytochrome b6-f complex are cytochrome b6, subunit IV (17 kDa polypeptide, PetD), cytochrome f and the Rieske protein, while the 4 small subunits are PetG, PetL, PetM and PetN. The complex functions as a dimer. The cofactor is heme b. Heme c serves as cofactor.

It is found in the cellular thylakoid membrane. Component of the cytochrome b6-f complex, which mediates electron transfer between photosystem II (PSII) and photosystem I (PSI), cyclic electron flow around PSI, and state transitions. This chain is Cytochrome b6, found in Prochlorococcus marinus (strain NATL1A).